We begin with the raw amino-acid sequence, 1773 residues long: ATP-binding cassette sub-family A member 17 (1773 aa).

Transmembrane regions (helical) follow at residues 22-42, 262-282, and 306-326; these read TLVT…VLYL, FPLL…NSIL, and AWFI…TVLF. Asn340 carries an N-linked (GlcNAc...) asparagine glycan. 4 helical membrane passes run 342–362, 372–392, 403–423, and 444–464; these read TLIF…AFMM, GTVI…YITF, ILSC…ISLF, and FTQV…VAFL. The region spanning 525–758 is the ABC transporter 1 domain; the sequence is IEIQHLYKVF…YGAGYYMTII (234 aa). 561–568 serves as a coordination point for ATP; the sequence is GHNGAGKT. Asn615 is a glycosylation site (N-linked (GlcNAc...) asparagine). A run of 7 helical transmembrane segments spans residues 912–932, 1088–1108, 1134–1154, 1166–1186, 1198–1218, 1236–1256, and 1293–1313; these read LVLS…LSFF, LVVN…ILTV, LLWD…VFFW, IPAV…LVYT, CVKL…LVTV, IFLI…YYNF, and IGKY…LLFL. Asn1340 is a glycosylation site (N-linked (GlcNAc...) asparagine). The region spanning 1369–1602 is the ABC transporter 2 domain; that stretch reads LVVKELSKVY…FGSGYSLQAK (234 aa). ATP is bound at residue 1404–1411; it reads GLNGAGKT. Residues 1690–1773 are disordered; that stretch reads NIQQGQAALD…SQPPSEPVLL (84 aa). Positions 1700–1710 are enriched in low complexity; the sequence is SSLSPSNSRPI. Pro residues-rich tracts occupy residues 1711–1740 and 1763–1773; these read SSPP…PSRP and PSQPPSEPVLL.

It belongs to the ABC transporter superfamily. ABCA family. Post-translationally, N-glycosylated.

The protein localises to the endoplasmic reticulum membrane. It is found in the cytoplasm. The enzyme catalyses cholesterol(in) + ATP + H2O = cholesterol(out) + ADP + phosphate + H(+). Its function is as follows. Promotes cholesterol efflux from sperm which renders sperm capable of fertilization. Has also been shown to decrease levels of intracellular esterified neutral lipids including cholesteryl esters, fatty acid esters and triacylglycerols. This Rattus norvegicus (Rat) protein is ATP-binding cassette sub-family A member 17.